The primary structure comprises 61 residues: Insect toxin BsIT2 (61 aa).

Residues Asp-1–Lys-61 form the LCN-type CS-alpha/beta domain. 4 disulfides stabilise this stretch: Cys-10-Cys-60, Cys-14-Cys-35, Cys-21-Cys-42, and Cys-25-Cys-44.

The protein belongs to the long (4 C-C) scorpion toxin superfamily. Sodium channel inhibitor family. Beta subfamily. In terms of tissue distribution, expressed by the venom gland.

The protein localises to the secreted. Its function is as follows. Depressant insect beta-toxins cause a transient contraction paralysis followed by a slow flaccid paralysis. They bind voltage-independently at site-4 of sodium channels (Nav) and shift the voltage of activation toward more negative potentials thereby affecting sodium channel activation and promoting spontaneous and repetitive firing. This toxin is active only on insects. This Hottentotta tamulus sindicus (Scorpion) protein is Insect toxin BsIT2.